The primary structure comprises 128 residues: NHP2-like protein 1 (128 aa).

An N-acetylmethionine modification is found at methionine 1. Threonine 2 bears the N-acetylthreonine; in NHP2-like protein 1, N-terminally processed mark. Lysine 21 carries the N6-acetyllysine modification. Positions 36 to 48 are interaction with U4 snRNA and U4atac snRNA; the sequence is RKGANEATKTLNR. The tract at residues 96–128 is important for U4 snRNA-binding; it reads SRPVIACSVTIKEGSQLKQQIQSIQQSIERLLV. Serine 122 carries the post-translational modification Phosphoserine.

It belongs to the eukaryotic ribosomal protein eL8 family. As to quaternary structure, identified in the spliceosome B complex. Component of the U4/U6-U5 tri-snRNP complex composed of the U4, U6 and U5 snRNAs and at least PRPF3, PRPF4, PRPF6, PRPF8, PRPF31, SNRNP200, TXNL4A, WDR57, SNRNP40, DDX23, CD2BP2, PPIH, NHP2L1, EFTUD2, SART1 and USP39. Interacts with RAD17 and PRPF31. The complex formed by SNU13 and PRPF31 binds U4 snRNA. The complex formed by SNU13 and PRPF31 also binds U4atac snRNA, a characteristic component of specific, less abundant spliceosomal complexes. Part of the small subunit (SSU) processome, composed of more than 70 proteins and the RNA chaperone small nucleolar RNA (snoRNA) U3. Core component of box C/D small nucleolar ribonucleoprotein (snoRNP) particles; the core proteins SNU13, NOP56, NOP58 and FBL or FBLL1 assemble stepwise onto the snoRNA.

It localises to the nucleus. Its subcellular location is the nucleolus. Its function is as follows. Part of the small subunit (SSU) processome, first precursor of the small eukaryotic ribosomal subunit. During the assembly of the SSU processome in the nucleolus, many ribosome biogenesis factors, an RNA chaperone and ribosomal proteins associate with the nascent pre-rRNA and work in concert to generate RNA folding, modifications, rearrangements and cleavage as well as targeted degradation of pre-ribosomal RNA by the RNA exosome. Involved in pre-mRNA splicing as component of the spliceosome. Binds to the 5'-stem-loop of U4 snRNA and thereby contributes to spliceosome assembly. The protein undergoes a conformational change upon RNA-binding. Core component of box C/D small nucleolar ribonucleoprotein (snoRNP) complexes that function in methylation of multiple sites on ribosomal RNAs (rRNAs) and messenger RNAs (mRNAs). This Bos taurus (Bovine) protein is NHP2-like protein 1.